Consider the following 293-residue polypeptide: Bifunctional protein FolD (293 aa).

Residues 165 to 167 (GRS), serine 190, and isoleucine 231 contribute to the NADP(+) site.

This sequence belongs to the tetrahydrofolate dehydrogenase/cyclohydrolase family. Homodimer.

The catalysed reaction is (6R)-5,10-methylene-5,6,7,8-tetrahydrofolate + NADP(+) = (6R)-5,10-methenyltetrahydrofolate + NADPH. It carries out the reaction (6R)-5,10-methenyltetrahydrofolate + H2O = (6R)-10-formyltetrahydrofolate + H(+). The protein operates within one-carbon metabolism; tetrahydrofolate interconversion. Catalyzes the oxidation of 5,10-methylenetetrahydrofolate to 5,10-methenyltetrahydrofolate and then the hydrolysis of 5,10-methenyltetrahydrofolate to 10-formyltetrahydrofolate. This is Bifunctional protein FolD from Parasynechococcus marenigrum (strain WH8102).